Reading from the N-terminus, the 612-residue chain is Elongation factor 4 (612 aa).

Residues 11–193 (KHIRNFSIVA…RIVTDISAPT (183 aa)) enclose the tr-type G domain. GTP contacts are provided by residues 23 to 28 (DHGKST) and 140 to 143 (NKID).

The protein belongs to the TRAFAC class translation factor GTPase superfamily. Classic translation factor GTPase family. LepA subfamily.

The protein resides in the cell membrane. It carries out the reaction GTP + H2O = GDP + phosphate + H(+). In terms of biological role, required for accurate and efficient protein synthesis under certain stress conditions. May act as a fidelity factor of the translation reaction, by catalyzing a one-codon backward translocation of tRNAs on improperly translocated ribosomes. Back-translocation proceeds from a post-translocation (POST) complex to a pre-translocation (PRE) complex, thus giving elongation factor G a second chance to translocate the tRNAs correctly. Binds to ribosomes in a GTP-dependent manner. The protein is Elongation factor 4 of Lactobacillus delbrueckii subsp. bulgaricus (strain ATCC 11842 / DSM 20081 / BCRC 10696 / JCM 1002 / NBRC 13953 / NCIMB 11778 / NCTC 12712 / WDCM 00102 / Lb 14).